We begin with the raw amino-acid sequence, 509 residues long: ATP synthase subunit alpha (509 aa).

169–176 lines the ATP pocket; that stretch reads GDRQTGKT.

The protein belongs to the ATPase alpha/beta chains family. In terms of assembly, F-type ATPases have 2 components, CF(1) - the catalytic core - and CF(0) - the membrane proton channel. CF(1) has five subunits: alpha(3), beta(3), gamma(1), delta(1), epsilon(1). CF(0) has three main subunits: a(1), b(2) and c(9-12). The alpha and beta chains form an alternating ring which encloses part of the gamma chain. CF(1) is attached to CF(0) by a central stalk formed by the gamma and epsilon chains, while a peripheral stalk is formed by the delta and b chains.

Its subcellular location is the cell inner membrane. It catalyses the reaction ATP + H2O + 4 H(+)(in) = ADP + phosphate + 5 H(+)(out). Functionally, produces ATP from ADP in the presence of a proton gradient across the membrane. The alpha chain is a regulatory subunit. This is ATP synthase subunit alpha from Brucella anthropi (strain ATCC 49188 / DSM 6882 / CCUG 24695 / JCM 21032 / LMG 3331 / NBRC 15819 / NCTC 12168 / Alc 37) (Ochrobactrum anthropi).